Here is a 198-residue protein sequence, read N- to C-terminus: Probable chorismate pyruvate-lyase (198 aa).

3 residues coordinate substrate: arginine 73, leucine 111, and glutamate 172.

It belongs to the UbiC family.

The protein localises to the cytoplasm. It carries out the reaction chorismate = 4-hydroxybenzoate + pyruvate. Its pathway is cofactor biosynthesis; ubiquinone biosynthesis. Removes the pyruvyl group from chorismate, with concomitant aromatization of the ring, to provide 4-hydroxybenzoate (4HB) for the ubiquinone pathway. The sequence is that of Probable chorismate pyruvate-lyase from Burkholderia lata (strain ATCC 17760 / DSM 23089 / LMG 22485 / NCIMB 9086 / R18194 / 383).